A 465-amino-acid chain; its full sequence is Argininosuccinate lyase (465 aa).

This sequence belongs to the lyase 1 family. Argininosuccinate lyase subfamily.

The protein resides in the cytoplasm. It carries out the reaction 2-(N(omega)-L-arginino)succinate = fumarate + L-arginine. It participates in amino-acid biosynthesis; L-arginine biosynthesis; L-arginine from L-ornithine and carbamoyl phosphate: step 3/3. The polypeptide is Argininosuccinate lyase (Rhodopseudomonas palustris (strain BisB5)).